A 396-amino-acid chain; its full sequence is Ribosomal RNA large subunit methyltransferase I (396 aa).

Positions 2 to 81 constitute a PUA domain; that stretch reads SVRLVLAKGR…ESIDIAFFSR (80 aa).

The protein belongs to the methyltransferase superfamily. RlmI family.

Its subcellular location is the cytoplasm. The catalysed reaction is cytidine(1962) in 23S rRNA + S-adenosyl-L-methionine = 5-methylcytidine(1962) in 23S rRNA + S-adenosyl-L-homocysteine + H(+). Functionally, specifically methylates the cytosine at position 1962 (m5C1962) of 23S rRNA. This Shigella boydii serotype 18 (strain CDC 3083-94 / BS512) protein is Ribosomal RNA large subunit methyltransferase I.